The following is a 361-amino-acid chain: MAASDLESKAKEAFVDDDFELAAELYTQAIDAGPATADLYADRAQAHIKLGNYTEAVADANKAIGLDPTMHKAYYRKGAACIKLEEYQTAKAALELGSSYAPGDSRFTRLLKECDECIAEESSQAPAKNVEAPVAATVEDKEDVANMDNTPPVVEPPSKPKYRHDYYNSATEVVLTIYAKGVPADSVVIDFGDQMLSVSIEVPGEEPYHFQPRLFSKIIPEKCKYQVLSTKVEIRLAKAEQVTWTTLDYSGRPKAIPQKISTPAETAPRPSYPSSKSKKDWDKLEAEVKKEEKEEKLEGDAALNKFFRDIYKDADEDMRRAMDKSFRESNGTVLSTNWKDVGSKTVEASPPDGMELKKWEI.

TPR repeat units lie at residues 3-36, 37-70, and 71-104; these read ASDL…GPAT, ADLY…DPTM, and HKAY…APGD. Thr-150 is subject to Phosphothreonine. Residues 159-248 enclose the CS domain; sequence KPKYRHDYYN…AEQVTWTTLD (90 aa). Positions 255-295 are disordered; that stretch reads AIPQKISTPAETAPRPSYPSSKSKKDWDKLEAEVKKEEKEE. Position 262 is a phosphothreonine (Thr-262). Positions 271–361 constitute an SGS domain; that stretch reads SYPSSKSKKD…DGMELKKWEI (91 aa). The span at 277–295 shows a compositional bias: basic and acidic residues; sequence SKKDWDKLEAEVKKEEKEE.

It belongs to the SGT1 family. Constitutively phosphorylated at Thr-262 and phosphorylated at Thr-150 upon infection with the fungal pathogen Ustilago maydis.

It localises to the cytoplasm. Its subcellular location is the nucleus. May act as positive regulator of basal defense. May be involved in basal disease resistance to the fungal pathogen Ustilago maydis. This Zea mays (Maize) protein is Protein SGT1 homolog.